Here is a 172-residue protein sequence, read N- to C-terminus: Zinc finger protein 580 (172 aa).

The interval Met-1–Tyr-92 is disordered. Positions Met-19 to Pro-30 are enriched in pro residues. A Glycyl lysine isopeptide (Lys-Gly) (interchain with G-Cter in SUMO2) cross-link involves residue Lys-31. The C2H2-type 1 zinc-finger motif lies at Tyr-92–His-114. Lys-118 is covalently cross-linked (Glycyl lysine isopeptide (Lys-Gly) (interchain with G-Cter in SUMO2)). 2 consecutive C2H2-type zinc fingers follow at residues Phe-120–His-142 and His-150–His-172.

As to quaternary structure, interacts with SMAD2.

Its subcellular location is the nucleus. Its function is as follows. Involved in the regulation of endothelial cell proliferation and migration. Mediates H(2)O(2)-induced leukocyte chemotaxis by elevating interleukin-8 production and may play a role in inflammation. May be involved in transcriptional regulation. This Mus musculus (Mouse) protein is Zinc finger protein 580 (Znf580).